A 277-amino-acid polypeptide reads, in one-letter code: Bifunctional protein FolD (277 aa).

Residues 164–166 (GRS), S189, and T230 contribute to the NADP(+) site.

Belongs to the tetrahydrofolate dehydrogenase/cyclohydrolase family. Homodimer.

It catalyses the reaction (6R)-5,10-methylene-5,6,7,8-tetrahydrofolate + NADP(+) = (6R)-5,10-methenyltetrahydrofolate + NADPH. The catalysed reaction is (6R)-5,10-methenyltetrahydrofolate + H2O = (6R)-10-formyltetrahydrofolate + H(+). The protein operates within one-carbon metabolism; tetrahydrofolate interconversion. Catalyzes the oxidation of 5,10-methylenetetrahydrofolate to 5,10-methenyltetrahydrofolate and then the hydrolysis of 5,10-methenyltetrahydrofolate to 10-formyltetrahydrofolate. The polypeptide is Bifunctional protein FolD (Clostridium perfringens (strain ATCC 13124 / DSM 756 / JCM 1290 / NCIMB 6125 / NCTC 8237 / Type A)).